The following is a 199-amino-acid chain: uncharacterized protein (199 aa).

This sequence to M.jannaschii MJ1356.

This is an uncharacterized protein from Methanocaldococcus jannaschii (strain ATCC 43067 / DSM 2661 / JAL-1 / JCM 10045 / NBRC 100440) (Methanococcus jannaschii).